The primary structure comprises 707 residues: Vicilin-like seed storage protein At2g18540 (707 aa).

The N-terminal stretch at 1-24 is a signal peptide; the sequence is MSRFRILPLSIFLCFVSLFFCTES. Positions 42-185 constitute a Cupin type-1 1 domain; sequence PLLVKKDQRT…AFAVPEDILR (144 aa). N-linked (GlcNAc...) asparagine glycans are attached at residues Asn-60, Asn-203, Asn-285, Asn-356, Asn-396, and Asn-399. In terms of domain architecture, Cupin type-1 2 spans 247-403; sequence FNVFEEDPDF…SFNLSNETIK (157 aa). The span at 439-696 shows a compositional bias: basic and acidic residues; that stretch reads EEEEIERRRK…KKEEEEEKRR (258 aa). Residues 439–707 are disordered; the sequence is EEEEIERRRK…PPQPKPPEEI (269 aa). Residues 698-707 show a composition bias toward pro residues; the sequence is PPQPKPPEEI.

The protein belongs to the 7S seed storage protein family.

In terms of biological role, seed storage protein. This is Vicilin-like seed storage protein At2g18540 from Arabidopsis thaliana (Mouse-ear cress).